Consider the following 1160-residue polypeptide: Protein translocase subunit SecA (1160 aa).

ATP-binding positions include Gln162 and 180–184 (GEGKT). Residues 342-362 (LLEEKEEAEEEGDSRRAQELE) form a disordered region. Residues 344-353 (EEKEEAEEEG) are compositionally biased toward acidic residues. Asp726 provides a ligand contact to ATP. Residues 1060–1134 (EVQTEGQGPR…RNEYVTVRNN (75 aa)) are disordered. A compositionally biased stretch (polar residues) spans 1074–1083 (QRNAQTQHDS). A compositionally biased stretch (basic and acidic residues) spans 1104–1115 (AAERDPTVEEKQ).

This sequence belongs to the SecA family. Monomer and homodimer. Part of the essential Sec protein translocation apparatus which comprises SecA, SecYEG and auxiliary proteins SecDF. Other proteins may also be involved.

The protein resides in the cell inner membrane. Its subcellular location is the cytoplasm. The catalysed reaction is ATP + H2O + cellular proteinSide 1 = ADP + phosphate + cellular proteinSide 2.. In terms of biological role, part of the Sec protein translocase complex. Interacts with the SecYEG preprotein conducting channel. Has a central role in coupling the hydrolysis of ATP to the transfer of proteins into and across the cell membrane, serving as an ATP-driven molecular motor driving the stepwise translocation of polypeptide chains across the membrane. In Salinibacter ruber (strain DSM 13855 / M31), this protein is Protein translocase subunit SecA.